A 461-amino-acid chain; its full sequence is Proline--tRNA ligase (461 aa).

It belongs to the class-II aminoacyl-tRNA synthetase family. ProS type 3 subfamily. In terms of assembly, homodimer.

The protein localises to the cytoplasm. It catalyses the reaction tRNA(Pro) + L-proline + ATP = L-prolyl-tRNA(Pro) + AMP + diphosphate. Functionally, catalyzes the attachment of proline to tRNA(Pro) in a two-step reaction: proline is first activated by ATP to form Pro-AMP and then transferred to the acceptor end of tRNA(Pro). This chain is Proline--tRNA ligase, found in Methanococcus vannielii (strain ATCC 35089 / DSM 1224 / JCM 13029 / OCM 148 / SB).